Reading from the N-terminus, the 331-residue chain is Pyruvate synthase subunit PorB (331 aa).

4 residues coordinate [4Fe-4S] cluster: Cys21, Cys24, Cys59, and Cys222.

Heterotetramer of one alpha, one beta, one delta and one gamma chain. It depends on [4Fe-4S] cluster as a cofactor.

It catalyses the reaction 2 oxidized [2Fe-2S]-[ferredoxin] + pyruvate + CoA = 2 reduced [2Fe-2S]-[ferredoxin] + acetyl-CoA + CO2 + H(+). The polypeptide is Pyruvate synthase subunit PorB (porB) (Pyrococcus furiosus (strain ATCC 43587 / DSM 3638 / JCM 8422 / Vc1)).